A 696-amino-acid chain; its full sequence is Equisetin cluster transcription factor eqxF (696 aa).

Disordered regions lie at residues 1–24 (MADQ…GRAR) and 73–117 (NQEQ…PADY).

It localises to the nucleus. Transcription factor that regulates the expression of the gene cluster that mediates the biosynthesis of Equisetin. This chain is Equisetin cluster transcription factor eqxF, found in Fusarium heterosporum.